The primary structure comprises 500 residues: 7-alpha-hydroxycholest-4-en-3-one 12-alpha-hydroxylase (500 aa).

Residues 2 to 21 form a helical membrane-spanning segment; sequence VLWGLLGALLMVMVGWLCLP. Ser325 is subject to Phosphoserine. Cys439 lines the heme pocket.

The protein belongs to the cytochrome P450 family. Heme is required as a cofactor. In terms of tissue distribution, liver (at protein level).

It localises to the endoplasmic reticulum membrane. Its subcellular location is the microsome membrane. The catalysed reaction is 7alpha-hydroxycholest-4-en-3-one + reduced [NADPH--hemoprotein reductase] + O2 = 7alpha,12alpha-dihydroxycholest-4-en-3-one + oxidized [NADPH--hemoprotein reductase] + H2O + H(+). The enzyme catalyses 5beta-cholestane-3alpha,7alpha-diol + reduced [NADPH--hemoprotein reductase] + O2 = 5beta-cholestane-3alpha,7alpha,12alpha-triol + oxidized [NADPH--hemoprotein reductase] + H2O + H(+). It catalyses the reaction chenodeoxycholate + reduced [NADPH--hemoprotein reductase] + O2 = cholate + oxidized [NADPH--hemoprotein reductase] + H2O + H(+). The protein operates within lipid metabolism; bile acid biosynthesis. With respect to regulation, up-regulated upon treatment with streptozotocin. Functionally, a cytochrome P450 monooxygenase involved in primary bile acid biosynthesis. Catalyzes the 12alpha-hydroxylation of 7alpha-hydroxy-4-cholesten-3-one, an intermediate metabolite in cholic acid biosynthesis. Controls biliary balance of cholic acid and chenodeoxycholic acid, ultimately regulating the intestinal absorption of dietary lipids. Mechanistically, uses molecular oxygen inserting one oxygen atom into a substrate, and reducing the second into a water molecule, with two electrons provided by NADPH via cytochrome P450 reductase (CPR; NADPH--hemoprotein reductase). The sequence is that of 7-alpha-hydroxycholest-4-en-3-one 12-alpha-hydroxylase (CYP8B1) from Oryctolagus cuniculus (Rabbit).